The sequence spans 2476 residues: MASSSSSTQAENLILIFGPQDPNLNDAYLQSLRTNLLDSPFLQWIVHTLIQLPQEWQRIAPTHTELGSFQGQKYLQLLSEWMRKGTLPGNIFPLPNILVTPLVVTTHLAQYTKLLEQLNPAIATNDMLSGIVKHDIQTVGLCTGLLSSAAVASSATLAELEKHGAAAIRMAMAIGALVDAGDTEVEDGDKWQSLAVGWTTQNGDAELEGISKQFSHAYVSVISEARLATLTMLKNDANAIQRELTNAGFIYTKTALRGPFHCGSREDQAVSLMRLFDSDPSFQFPGASTLVFRTRAPDGEEFPLDRSLHGAAARAMLTDQADWHKLYTKLHESTNSHPGIVITFGSQRFIPQWFLRKLGPRLAHVLDLDVGSGHWPAPLYTLQDSGQDESIAVVGMACNFPGGSDLDEFWDTVCAAKSQCTEVPPERVDFDYEAWRENDTQRKWFGNFIREYDTFDHKFFQKSPREMISTDPQHRIMLQVAYQAVQQSGYFNRPGRSKHVGCYVGIGVTDYENNVACHPPTAYTATGNLKSFAAGKISHFFGWSGPGVTVDTACSSSALAIHLACKAILSGECDASLAGGVNVITSPEWYQNLDGASFLSPTGQCKPFDAAADGYCRGEGAGAVFLKRLSSAVEDGDQIVGVIRATSVNQNENCSAITAPSVRSLANVFNGVIRKARVDPKQISVVEAHGTGTQVGDRAEYDSIRTVLGGPGRAYPLSLGSVKGLIGHLECASGIAALIKVLLMVQNGIIPPQPGFSKINPKLEALPSDNIEIPTSLRPWNPGFRAALLNNYGASGSNASLVVTQAGVPHLNQSAIPKGASAGRRPFWLSGTDVQSLRSYAAKLVQMLRSRKADDPRFTVANLSFQLARQSNRNLGQALIFSCASVDELEAKLADFASGGNTLTSVPRPDSSRPVILCFGGQRSSFVGLDREAFDSFKLLKSHLTHCHETSLALGLGGILPAIFDRTPRSSIVELQLMQFALQYSCAKTWIDSGIHVAALVGHSFGELTAMCVSGTLSLQDTLRMIAGRARIIEEKWGPDRGSMMAVDGELELVQRLLHNAHEASPNEPAVNIACFNGPRLFTLAGTTKAMRVVREVLSKDNRLSSIKVKSLETSHAFHSTLVEPLIPDLEELGEESIFRKPVVVHERATQNSVAGPPPFSIFASHMRDPVYFDRAVQRLANRYPSSIWLEAGSGSGVTNLASRAAGSRAMAFQSINITSSSAVQNVADATLNLWKEGLQVMFWEHVRPSPKFPLLLLPPYQFAKSRHWLERRKLKTKVFVPASPVQEAQKGLWTFVGYQDSDRCQARFQIHITSDEFQNYVSAHVIAQTAPICPSMFQQVIARDALATLVDGDMIPELEGMENDTPLCLDGSKSVWLVAERPSDRSSAWDFRITSSDSGNTTQHVSGRITFQTPKQSMQAFAAYERLVDHRRALALLNGQEAEQTIQGSRNIYKLFSNVVNYKEDGYRGLQKLAATSNESAGRIIKQDSSKSILGVGLGDTFCQVAGIFLNCMTDCDEGKMYLSNRVERWIRSPTVPLDLRPEQWEVYARHHQPSPKEYVSDIFVFDATNGKLVWVILGLHFVEVSIAGMSRFLTRLSGGQLEPQEKCLATVEFKEVPEPVFTKDVSKNEKDAKAPSKKKESTSKSPGHDILARVRTLFCNLLGLEPVEIQPGADLVELGIDSLLAMEVAREVEKEFSIKFELDELMDMTDVHSLVKCIGANMMASDTSRTGDDSSDDLETASAESETSSGINNEDSHNIDRQQIPASSIVDSFTETKLLTDRFIEANKLSGYSNNVQPRLTELVIVHTLDAFDQMGCSIRAAQPGQTVRRISHLPKHNQVVAVLYGLLEKASLVDVDGPRMTRTAVPVPSKSAEQILQELLRQYPEHAYDHKLTSLTGCKLADCLTGKTEAIQLLFGTPEGRDLAAGMYGKSPINVAWLRQLQHFWEHFLAQLPQHRTEPINILEMGAGTGGTTAALVPLLSRSRIPVRYTATDISPSLVAGLRKRFKDHTWMRFEVVDCEKTPSSHLFESQHVVLAVAIIPPAPSKMSTADIASRQAIIDTLVEKHTSHFSAPTCLPPNQVIDGSPHCVLVTGATGSLGSHLVAHLVKQSSVTKVVCLNRVSGSDATSRQLDAFQSKGLILDSESLSKLEVIETDSSAPSLGLVPERYQHLVNTVTDVVHNAWAMSMTRPVRGFEPQFKTMRNLIDLCRDCANRRHSDTGKVGFQFVSSVSVVGCHPFITKKAIVPEQPVNAESALPMGYADAKLVCEHILDETLHMHPDIFRTMSVRVGQISGSKINGYWNPVEHLVHLIKSSKTLNVLPDLEGVLSWCPVDDVAAALGDLLLTNKPAYSVYHIENPVRQPWPDMLTILADALDIPRTNAVPFKEWLRRVRHFPPSLGFSENPAARLADFFETDFLRMSCGGMILDTTRSREHSATLRSLGPIDQDLVMKITFKRIYAIFAKSSEVKIKKSS.

The tract at residues Pro22–Leu230 is N-terminal acylcarrier protein transacylase domain (SAT). The active-site Nucleophile; for transacylase activity is Cys142. His261 (proton donor/acceptor; for transacylase activity) is an active-site residue. A Ketosynthase family 3 (KS3) domain is found at Asp388–Gln805. Active-site for beta-ketoacyl synthase activity residues include Cys554, His689, and His728. The interval Phe919–Arg1204 is malonyl-CoA:ACP transacylase (MAT). The tract at residues Gln1290–Gln1417 is N-terminal hotdog fold. A PKS/mFAS DH domain is found at Gln1290–Ser1592. Residues Tyr1321–Gly1590 form a product template (PT) domain region. Catalysis depends on His1325, which acts as the Proton acceptor; for dehydratase activity. Residues Gln1445 to Ser1592 form a C-terminal hotdog fold region. Asp1501 acts as the Proton donor; for dehydratase activity in catalysis. The tract at residues Asp1626–Gly1649 is disordered. A Carrier domain is found at His1650–Met1724. Position 1684 is an O-(pantetheine 4'-phosphoryl)serine (Ser1684). The segment at Ser1727–Ile1766 is disordered. Residues Thr1742–Ser1751 show a composition bias toward low complexity. The tract at residues Glu1881–Leu2030 is methyltransferase (CMeT) domain. The tract at residues Val2094–Ala2340 is NADPH-binding domain.

The cofactor is pantetheine 4'-phosphate.

The catalysed reaction is propanoyl-CoA + 3 malonyl-CoA + AH2 + 2 S-adenosyl-L-methionine + H(+) = 2-ethyl-4,6-dihydroxy-3,5-dimethylbenzaldehyde + A + 2 S-adenosyl-L-homocysteine + 3 CO2 + 4 CoA + H2O. It functions in the pathway secondary metabolite biosynthesis. Its function is as follows. Non-reducing polyketide synthase that synthesizes 6-ethyl-2,4-dihydroxy-3,5-dimethylbenzaldehyde via condensation of one propanoyl-CoA starter unit with 3 malonyl-CoA units, as well as 2 methylation steps. The polypeptide is Non-reducing polyketide synthase pkdA (Emericella nidulans (strain FGSC A4 / ATCC 38163 / CBS 112.46 / NRRL 194 / M139) (Aspergillus nidulans)).